Reading from the N-terminus, the 242-residue chain is NH(3)-dependent NAD(+) synthetase (242 aa).

27-34 (GISGGIDS) provides a ligand contact to ATP. Asp-33 contacts Mg(2+). Arg-109 lines the deamido-NAD(+) pocket. Thr-129 is an ATP binding site. Glu-134 contributes to the Mg(2+) binding site. Deamido-NAD(+)-binding residues include Lys-142 and Asp-149. Residues Lys-158 and Thr-180 each coordinate ATP. Position 231–232 (231–232 (HK)) interacts with deamido-NAD(+).

It belongs to the NAD synthetase family. Homodimer.

It carries out the reaction deamido-NAD(+) + NH4(+) + ATP = AMP + diphosphate + NAD(+) + H(+). It functions in the pathway cofactor biosynthesis; NAD(+) biosynthesis; NAD(+) from deamido-NAD(+) (ammonia route): step 1/1. Its function is as follows. Catalyzes the ATP-dependent amidation of deamido-NAD to form NAD. Uses ammonia as a nitrogen source. The polypeptide is NH(3)-dependent NAD(+) synthetase (Thermoplasma volcanium (strain ATCC 51530 / DSM 4299 / JCM 9571 / NBRC 15438 / GSS1)).